Here is a 482-residue protein sequence, read N- to C-terminus: Catalase easC (482 aa).

The active site involves His58. Heme is bound at residue Tyr347.

The protein belongs to the catalase family. The cofactor is heme.

Its pathway is alkaloid biosynthesis; ergot alkaloid biosynthesis. Catalase; part of the gene cluster that mediates the biosynthesis of fungal ergot alkaloid. DmaW catalyzes the first step of ergot alkaloid biosynthesis by condensing dimethylallyl diphosphate (DMAP) and tryptophan to form 4-dimethylallyl-L-tryptophan. The second step is catalyzed by the methyltransferase easF that methylates 4-dimethylallyl-L-tryptophan in the presence of S-adenosyl-L-methionine, resulting in the formation of 4-dimethylallyl-L-abrine. The catalase easC and the FAD-dependent oxidoreductase easE then transform 4-dimethylallyl-L-abrine to chanoclavine-I which is further oxidized by easD in the presence of NAD(+), resulting in the formation of chanoclavine-I aldehyde. Chanoclavine-I aldehyde is the precursor of ergoamides and ergopeptines in Clavicipitaceae, and clavine-type alcaloids such as fumiclavine in Trichocomaceae. However, the metabolites downstream of chanoclavine-I aldehyde in Arthrodermataceae have not been identified yet. This chain is Catalase easC, found in Arthroderma otae (strain ATCC MYA-4605 / CBS 113480) (Microsporum canis).